We begin with the raw amino-acid sequence, 409 residues long: Pentatricopeptide repeat-containing protein At5g09450, mitochondrial (409 aa).

A mitochondrion-targeting transit peptide spans 1–38 (MATRSLFHSLRCRLTNNGVLGSNFIRNAESSRFSKSYN). 6 PPR repeats span residues 155–189 (TAETYTSLLHAYAASKQTERAEALFKRIIESDSLT), 191–225 (GAITYNEMMTLYMSVGQVEKVPEVIEVLKQKKVSP), 226–256 (DIFTYNLWLSSCAATFNIDELRKILEEMRHD), 262–296 (GWVRYIDLTSIYINSSRVTNAESTLPVEAEKSISQ), 298–332 (EWITYDFLMILHTGLGNKVMIDQIWKSLRNTNQIL), and 333–367 (SSRSYICVLSSYLMLGHLREAEEIIHQWKESKTTE).

It belongs to the PPR family. P subfamily.

It localises to the mitochondrion. This chain is Pentatricopeptide repeat-containing protein At5g09450, mitochondrial, found in Arabidopsis thaliana (Mouse-ear cress).